We begin with the raw amino-acid sequence, 251 residues long: Ditrans,polycis-undecaprenyl-diphosphate synthase ((2E,6E)-farnesyl-diphosphate specific) (251 aa).

Asp26 is an active-site residue. Asp26 lines the Mg(2+) pocket. Substrate is bound by residues 27–30, Trp31, Arg39, His43, and 71–73; these read GNGR and SSE. Asn74 functions as the Proton acceptor in the catalytic mechanism. Substrate-binding positions include Trp75, Arg77, Arg194, and 200–202; that span reads RIS. Glu213 serves as a coordination point for Mg(2+).

It belongs to the UPP synthase family. In terms of assembly, homodimer. The cofactor is Mg(2+).

The enzyme catalyses 8 isopentenyl diphosphate + (2E,6E)-farnesyl diphosphate = di-trans,octa-cis-undecaprenyl diphosphate + 8 diphosphate. Functionally, catalyzes the sequential condensation of isopentenyl diphosphate (IPP) with (2E,6E)-farnesyl diphosphate (E,E-FPP) to yield (2Z,6Z,10Z,14Z,18Z,22Z,26Z,30Z,34E,38E)-undecaprenyl diphosphate (di-trans,octa-cis-UPP). UPP is the precursor of glycosyl carrier lipid in the biosynthesis of bacterial cell wall polysaccharide components such as peptidoglycan and lipopolysaccharide. The chain is Ditrans,polycis-undecaprenyl-diphosphate synthase ((2E,6E)-farnesyl-diphosphate specific) from Buchnera aphidicola subsp. Acyrthosiphon pisum (strain APS) (Acyrthosiphon pisum symbiotic bacterium).